A 79-amino-acid polypeptide reads, in one-letter code: Serine protease inhibitor Kazal-type 1 (79 aa).

The signal sequence occupies residues 1–23; sequence MKVTGIFLLSALALLSLSGNTGA. The region spanning 26 to 79 is the Kazal-like domain; it reads LGREAKCYNELNGCTKIYDPVCGTDGNTYPNECVLCFENRKRQTSILIQKSGPC. Intrachain disulfides connect cysteine 32–cysteine 61, cysteine 39–cysteine 58, and cysteine 47–cysteine 79.

It is found in the secreted. Serine protease inhibitor which exhibits anti-trypsin activity. In the pancreas, protects against trypsin-catalyzed premature activation of zymogens. Its function is as follows. In the male reproductive tract, binds to sperm heads where it modulates sperm capacitance by inhibiting calcium uptake and nitrogen oxide (NO) production. This is Serine protease inhibitor Kazal-type 1 (SPINK1) from Homo sapiens (Human).